A 130-amino-acid chain; its full sequence is MDFSHIVSEDKIKRAIKDGDFQNLPGMGKPLPKDDAAHLPESLRMGYRILKNAGMAEDEGALKKELMTIDHLIEKCYDEKEREQLIRKKSEKQLLLDKLVDKKGMFSKPASAFYKNKVYDRLGRNRPSSS.

This is an uncharacterized protein from Bacillus subtilis (strain 168).